The following is a 423-amino-acid chain: ATP-dependent Clp protease ATP-binding subunit ClpX (423 aa).

Residues 1–50 (MTDDTEYRCSFCGKEHHQVDDLIAGPDVRICSECVVLSCEIVEDRRNEAL) form the ClpX-type ZB domain. 4 residues coordinate Zn(2+): C9, C12, C31, and C34. 126–133 (PTGCGKTY) contacts ATP.

Belongs to the ClpX chaperone family. Component of the ClpX-ClpP complex. Forms a hexameric ring that, in the presence of ATP, binds to fourteen ClpP subunits assembled into a disk-like structure with a central cavity, resembling the structure of eukaryotic proteasomes.

Functionally, ATP-dependent specificity component of the Clp protease. It directs the protease to specific substrates. Can perform chaperone functions in the absence of ClpP. This Tropheryma whipplei (strain Twist) (Whipple's bacillus) protein is ATP-dependent Clp protease ATP-binding subunit ClpX.